A 601-amino-acid chain; its full sequence is Elongation factor 4 (601 aa).

Residues 5–187 enclose the tr-type G domain; sequence EHIRNFSIIA…AIVERLPAPE (183 aa). GTP contacts are provided by residues 17–22 and 134–137; these read DHGKST and NKID.

It belongs to the TRAFAC class translation factor GTPase superfamily. Classic translation factor GTPase family. LepA subfamily.

The protein resides in the cell inner membrane. It carries out the reaction GTP + H2O = GDP + phosphate + H(+). Functionally, required for accurate and efficient protein synthesis under certain stress conditions. May act as a fidelity factor of the translation reaction, by catalyzing a one-codon backward translocation of tRNAs on improperly translocated ribosomes. Back-translocation proceeds from a post-translocation (POST) complex to a pre-translocation (PRE) complex, thus giving elongation factor G a second chance to translocate the tRNAs correctly. Binds to ribosomes in a GTP-dependent manner. This chain is Elongation factor 4, found in Nitratidesulfovibrio vulgaris (strain ATCC 29579 / DSM 644 / CCUG 34227 / NCIMB 8303 / VKM B-1760 / Hildenborough) (Desulfovibrio vulgaris).